The primary structure comprises 341 residues: tRNA N6-adenosine threonylcarbamoyltransferase (341 aa).

2 residues coordinate Fe cation: His118 and His122. Substrate-binding positions include 141–145 (LVSGG), Asp174, Gly187, and Asn281. Asp309 lines the Fe cation pocket.

This sequence belongs to the KAE1 / TsaD family. Fe(2+) is required as a cofactor.

Its subcellular location is the cytoplasm. It catalyses the reaction L-threonylcarbamoyladenylate + adenosine(37) in tRNA = N(6)-L-threonylcarbamoyladenosine(37) in tRNA + AMP + H(+). Functionally, required for the formation of a threonylcarbamoyl group on adenosine at position 37 (t(6)A37) in tRNAs that read codons beginning with adenine. Is involved in the transfer of the threonylcarbamoyl moiety of threonylcarbamoyl-AMP (TC-AMP) to the N6 group of A37, together with TsaE and TsaB. TsaD likely plays a direct catalytic role in this reaction. The sequence is that of tRNA N6-adenosine threonylcarbamoyltransferase from Desulfitobacterium hafniense (strain Y51).